The following is a 366-amino-acid chain: Caffeic acid 3-O-methyltransferase (366 aa).

131 to 137 (MNQDKIL) contacts substrate. Positions 163–181 (AFEYHGTDPRFNKIFNRGM) are substrate binding. Gly-209, Asp-232, Asp-252, Met-253, and Lys-266 together coordinate S-adenosyl-L-methionine. Catalysis depends on His-270, which acts as the Proton acceptor.

The protein belongs to the class I-like SAM-binding methyltransferase superfamily. Cation-independent O-methyltransferase family. COMT subfamily. Homodimer.

It carries out the reaction (E)-caffeate + S-adenosyl-L-methionine = (E)-ferulate + S-adenosyl-L-homocysteine + H(+). The protein operates within aromatic compound metabolism; phenylpropanoid biosynthesis. In terms of biological role, catalyzes the conversion of caffeic acid to ferulic acid and of 5-hydroxyferulic acid to sinapic acid. The resulting products may subsequently be converted to the corresponding alcohols that are incorporated into lignins. This is Caffeic acid 3-O-methyltransferase (OMT) from Eucalyptus gunnii (Cider gum).